Consider the following 861-residue polypeptide: DNA primase (861 aa).

Residues 805-843 (CLTRNHKGNRENVLVYLEFKVDNNRILIILWSKCFTTKC) form a CHC2-type zinc finger.

It belongs to the herpesviridae DNA primase family. As to quaternary structure, associates with the helicase and the primase-associated factor to form the helicase-primase factor.

It is found in the host nucleus. In terms of biological role, essential component of the helicase/primase complex. Unwinds the DNA at the replication forks and generates single-stranded DNA for both leading and lagging strand synthesis. The primase initiates primer synthesis and thereby produces large amount of short RNA primers on the lagging strand that the polymerase elongates using dNTPs. This is DNA primase (U43) from Human herpesvirus 7 (strain JI) (HHV-7).